A 373-amino-acid chain; its full sequence is MTIDGDVHEISPFFQVRQTKWGGRACFSNGNIPKGTTVLQVSNFTGTSISYEFRKEVCHNCFAYANAKTMKYKLNYDYLRDLVCNAHYQINPKKFLGAGLWFCSEHCRTSYLQIPNIIELIECYEILLHHFPSMLKRYNYTSEQEEKLNSILISENVIQSSWDEIESKWIPRINNMKSAKRINQLPPTCEDEYCCIRFVCESLFNLKYMDPQCITYRAFNMLQSNELSKISKFPVLLHFQKLVFQTLYILLPSHLHRMLSIPLLRHILGTEYGNAFGLWQEGEASDSREYFGYWVFPEASYFNHSCNPNITKYRKGNSMLFTMNRDIKKDEQICIDYSGVLDLPTVKRRAFLADSWFFDCACERCKSELQSVH.

The 327-residue stretch at 12–338 folds into the SET domain; the sequence is PFFQVRQTKW…KDEQICIDYS (327 aa).

The protein belongs to the class V-like SAM-binding methyltransferase superfamily.

Functionally, involved in resistance to compounds that target ergosterol biosynthesis, including fenpropimorph, dyclonine, and alverine citrate. Since a deletion in the absence of these compounds does not have an effect on growth, is more likely to be involved in compound availability. This chain is Potential protein lysine methyltransferase SET6 (SET6), found in Saccharomyces cerevisiae (strain ATCC 204508 / S288c) (Baker's yeast).